A 521-amino-acid polypeptide reads, in one-letter code: MSSSTVWILISILLATVGAVVGFFVRKSIAEAKINGAANEAKRILDEANRDAEALKKEALLEAKDEIHTLRTEAELEIRDRRSELQKQENRLMQKEENLDRKDETLDNRERQLEKKEESLVAKQQQIEELESKVGELVQKQQTELERISNLTREQAKAIILGKVESEVSHEIAVMVKESEVRAKEEADKKAKEILSLAMQRCAADHVAETTVSVVNLPNDEMKGRIIGREGRNIRTLETLTGIDLIIDDTPEAVILSGFDPIRRETARIALDKLVQDGRIHPARIEEMVEKSRREVDEYIREVGEQTTFEVGVHGLHPDLIKILGRLKYRTSYGQNVLKHSMEVAYLTGLMAAELGEDEKLARRAGLLHDIGKAIDHEVEGSHVEIGVELATKYKEHPVVINSIASHHGDTEPTSIIAVLVAAADALSAARPGARSETLENYIRRLEKLEEISESYEGVEKSFAIQAGREVRILVKPDTIDDLEAHRLARDIRKRIENELDYPGHIKVTVIRETRAVEYAK.

A helical transmembrane segment spans residues 5-25 (TVWILISILLATVGAVVGFFV). The disordered stretch occupies residues 87–117 (KQENRLMQKEENLDRKDETLDNRERQLEKKE). The 64-residue stretch at 211 to 274 (TVSVVNLPND…ETARIALDKL (64 aa)) folds into the KH domain. One can recognise an HD domain in the interval 337–430 (VLKHSMEVAY…VAAADALSAA (94 aa)).

This sequence belongs to the RNase Y family.

It localises to the cell membrane. In terms of biological role, endoribonuclease that initiates mRNA decay. The protein is Ribonuclease Y of Bacillus mycoides (strain KBAB4) (Bacillus weihenstephanensis).